A 270-amino-acid polypeptide reads, in one-letter code: NAD kinase (270 aa).

D61 functions as the Proton acceptor in the catalytic mechanism. NAD(+) is bound by residues 61–62 (DG), 133–134 (NE), R144, R163, D165, and 176–181 (TAYNLS).

It belongs to the NAD kinase family. The cofactor is a divalent metal cation.

It localises to the cytoplasm. The catalysed reaction is NAD(+) + ATP = ADP + NADP(+) + H(+). Functionally, involved in the regulation of the intracellular balance of NAD and NADP, and is a key enzyme in the biosynthesis of NADP. Catalyzes specifically the phosphorylation on 2'-hydroxyl of the adenosine moiety of NAD to yield NADP. This is NAD kinase from Natronomonas pharaonis (strain ATCC 35678 / DSM 2160 / CIP 103997 / JCM 8858 / NBRC 14720 / NCIMB 2260 / Gabara) (Halobacterium pharaonis).